A 212-amino-acid chain; its full sequence is uncharacterized protein (212 aa).

The signal sequence occupies residues 1–21 (MRRLTAFGLALLLLASGVARG).

The protein to E.coli YfaT and T.maritima TM0986.

This is an uncharacterized protein from Pseudomonas aeruginosa (strain ATCC 15692 / DSM 22644 / CIP 104116 / JCM 14847 / LMG 12228 / 1C / PRS 101 / PAO1).